A 236-amino-acid polypeptide reads, in one-letter code: Peptidase E (236 aa).

Catalysis depends on charge relay system residues Ser-122, Asp-137, and His-159.

It belongs to the peptidase S51 family.

It is found in the cytoplasm. The enzyme catalyses Dipeptidase E catalyzes the hydrolysis of dipeptides Asp-|-Xaa. It does not act on peptides with N-terminal Glu, Asn or Gln, nor does it cleave isoaspartyl peptides.. In terms of biological role, hydrolyzes dipeptides containing N-terminal aspartate residues. May play a role in allowing the cell to use peptide aspartate to spare carbon otherwise required for the synthesis of the aspartate family of amino acids. This chain is Peptidase E, found in Shewanella oneidensis (strain ATCC 700550 / JCM 31522 / CIP 106686 / LMG 19005 / NCIMB 14063 / MR-1).